Reading from the N-terminus, the 584-residue chain is MTPPRLFWVWLLVAGTQGVNDGDMRLADGGATNQGRVEIFYRGQWGTVCDNLWDLTDASVVCRALGFENATQALGRAAFGQGSGPIMLDEVQCTGTEASLADCKSLGWLKSNCRHERDAGVVCTNETRSTHTLDLSRELSEALGQIFDSQRGCDLSISVNVQGEDALGFCGHTVILTANLEAQALWKEPGSNVTMSVDAECVPMVRDLLRYFYSRRIDITLSSVKCFHKLASAYGARQLQGYCATLFAILLPQDPSFHMPLDLYAYAVATGDALLEKLCLQFLAWNFEALTQAEAWPSVPTDLLQLLLPRSDLAVPSELALLKAVDTWWGERASHEEVEGLVEKIRFPMMLPEELFELQFNLSLYWSHEALFQKKTLQALEFHTVPFQLLARYKGLNLTEDTYKPRIYTSPTWSAFVTDSSWSARKSQLVYQSRRGPLVKYSSDYFQAPSDYRYYPYQSFQTPQHPSFLFQDKRVSWSLVYLPTIQSCWNYGFSCSSDELPVLGLTKSGGSDRTIAYENKALMLCEGLFVADVTDFEGWKAAIPSALDTNSSKSTSSFPCPAGHFNGFRTVIRPFYLTNSSGVD.

The first 18 residues, 1-18 (MTPPRLFWVWLLVAGTQG), serve as a signal peptide directing secretion. Residues 24 to 124 (MRLADGGATN…HERDAGVVCT (101 aa)) enclose the SRCR domain. 3 cysteine pairs are disulfide-bonded: Cys-49-Cys-113, Cys-62-Cys-123, and Cys-93-Cys-103. A glycan (N-linked (GlcNAc...) asparagine) is linked at Asn-69. N-linked (GlcNAc...) asparagine glycans are attached at residues Asn-125 and Asn-192. Residues 153–221 (CDLSISVNVQ…FYSRRIDITL (69 aa)) enclose the BTB domain. Residues 260–359 (PLDLYAYAVA…MLPEELFELQ (100 aa)) form the BACK domain. Residues Asn-361, Asn-397, Asn-550, and Asn-579 are each glycosylated (N-linked (GlcNAc...) asparagine).

In terms of assembly, homodimers and homomultimers. The multimers form ring-like structures with a diameter of 30-40 nm. Binds LGALS1 and LGALS3. Binds ITGB1, COL4A1, COL5A1, COL6A1, FN1 and NID. Interacts with the gamma-tubulin ring complex (gamma-TuRC), composed of gamma-tubulin, TUBGCP2, TUBGCP3, TUBGCP4, TUBGCP5 and TUBGCP6. The unglycosylated form interacts with PDE4DIP; this interaction, which is PDE4DIP isoform-specific, may connect a pericentrosomal complex, made of AKAP9, CDK5RAP2, EB1/MAPRE1 and PDE4DIP, to the gamma-tubulin ring complex (gamma-TuRC) to promote microtubule assembly and acetylation.

It localises to the secreted. It is found in the extracellular space. The protein resides in the extracellular matrix. In terms of biological role, promotes integrin-mediated cell adhesion. May stimulate host defense against viruses and tumor cells. The chain is Galectin-3-binding protein (LGALS3BP) from Pongo abelii (Sumatran orangutan).